Reading from the N-terminus, the 1893-residue chain is Nestin (1893 aa).

N-acetylmethionine is present on methionine 1. The segment at 1–7 (MEGCVGE) is head. The interval 8–43 (ESFQMWELNRRLEAYLTRVKTLEEQNQLLSAELGGL) is coil 1A. Residues 8-314 (ESFQMWELNR…TLLEAENSRL (307 aa)) form the IF rod domain. The linker 1 stretch occupies residues 44–55 (RAQSGDTSWRAR). The tract at residues 56-151 (ADDELASLRI…AAHEEERAHL (96 aa)) is coil 1B. Residues 150-172 (HLNAQAACAPRRPPAPPHGSPVR) form a disordered region. The interval 152-174 (NAQAACAPRRPPAPPHGSPVRAP) is linker 12. The segment at 175–193 (EVEDLARRLGEVWRGAVRD) is coil 2A. The interval 194–196 (YQE) is linker 2. The segment at 197–314 (RVAHMESSLG…TLLEAENSRL (118 aa)) is coil 2B. Phosphoserine is present on serine 312. The interval 315-1893 (QTPGRGSQAS…DGDSWSSGED (1579 aa)) is tail. Position 316 is a phosphothreonine (threonine 316). Phosphoserine is present on residues serine 356 and serine 359. Threonine 389 is modified (phosphothreonine). Disordered regions lie at residues 437-479 (PELE…SGSR), 507-529 (NSSAQKTQESGLDTEETQDSQGP), and 556-879 (KENC…NQKS). The span at 507–517 (NSSAQKTQESG) shows a compositional bias: polar residues. Serine 562 is modified (phosphoserine). Composition is skewed to basic and acidic residues over residues 572–595 (GPEKEKQIPLKSLEEKNVESEKTL) and 606–615 (LGKEDTRTED). The residue at position 620 (serine 620) is a Phosphoserine. Composition is skewed to basic and acidic residues over residues 634–646 (ESQEVVRPSKEGN) and 670–681 (MLERLVEKEDQS). Phosphoserine occurs at positions 685 and 729. Composition is skewed to basic and acidic residues over residues 717-730 (RLIEKESQESLRSP), 761-774 (RLIEKESQESLRSA), 802-818 (ILERLIEKESQESLRSP), and 846-879 (MLERLIEKESQESLKSPEENQRIGKPLERENQKS). At serine 817 the chain carries Phosphoserine. At serine 903 the chain carries Phosphoserine. Basic and acidic residues-rich tracts occupy residues 949 to 966 (LLEDKTHKSLGSLEDRNG) and 989 to 1051 (QRIV…KSLE). The segment at 949–1130 (LLEDKTHKSL…ARSLGKENQE (182 aa)) is disordered. Residues serine 1005 and serine 1049 each carry the phosphoserine modification. Lysine 1136 participates in a covalent cross-link: Glycyl lysine isopeptide (Lys-Gly) (interchain with G-Cter in SUMO1); alternate. A Glycyl lysine isopeptide (Lys-Gly) (interchain with G-Cter in SUMO2); alternate cross-link involves residue lysine 1136. Phosphoserine occurs at positions 1145 and 1166. The interval 1155 to 1222 (ETAEEDLERR…ELSSLGKWNV (68 aa)) is disordered. Residues 1198 to 1212 (DENRETLTSLEKESQ) are compositionally biased toward basic and acidic residues. Serine 1216 and serine 1229 each carry phosphoserine. The tract at residues 1237-1263 (EGLQEEQHQESLREVKQELPSSGNQQR) is disordered. The span at 1241–1253 (EEQHQESLREVKQ) shows a compositional bias: basic and acidic residues. Serine 1322 is modified (phosphoserine). 2 disordered regions span residues 1336 to 1369 (DNLEGGALEVPVAQSMPEVTERDEDRAQAGEQDS) and 1388 to 1824 (EVVG…SEQV). 2 stretches are compositionally biased toward basic and acidic residues: residues 1354–1363 (VTERDEDRAQ) and 1393–1403 (EDPRHFAREEA). 2 stretches are compositionally biased toward acidic residues: residues 1458-1469 (ESMEGWEEEEAS) and 1561-1576 (QDWEEGREESEADDLG). A phosphoserine mark is found at serine 1570, serine 1594, serine 1686, serine 1695, serine 1772, and serine 1774. Over residues 1688-1709 (GFADEEESGEEGEEEDADEEGA) the composition is skewed to acidic residues. Acidic residues predominate over residues 1773 to 1788 (GSEESESASLEGEEGQ). Polar residues predominate over residues 1815 to 1824 (QSPNLDSEQV). 3 positions are modified to phosphoserine: serine 1866, serine 1889, and serine 1890. The disordered stretch occupies residues 1870-1893 (LGPSQPLKFTLSGVDGDSWSSGED).

The protein belongs to the intermediate filament family. Forms homodimers and homotetramers in vitro. In mixtures with other intermediate filament proteins such as vimentin and alpha-internexin, this protein preferentially forms heterodimers which can assemble to form intermediate filaments if nestin does not exceed 25%. Interacts with FHOD3. In terms of processing, constitutively phosphorylated. This increases during mitosis when the cytoplasmic intermediate filament network is reorganized. In terms of tissue distribution, CNS stem cells.

Required for brain and eye development. Promotes the disassembly of phosphorylated vimentin intermediate filaments (IF) during mitosis and may play a role in the trafficking and distribution of IF proteins and other cellular factors to daughter cells during progenitor cell division. Required for survival, renewal and mitogen-stimulated proliferation of neural progenitor cells. In Rattus norvegicus (Rat), this protein is Nestin (Nes).